Here is a 74-residue protein sequence, read N- to C-terminus: Acyclotide phyb-K (74 aa).

An N-terminal signal peptide occupies residues 1-24 (MARVNSLKCALCFIVLILFVQLNC). Positions 25-43 (IPETRVMAVELSRVFLQTS) are excised as a propeptide. Disulfide bonds link C47–C64, C51–C66, and C56–C71.

In terms of processing, contains 3 disulfide bonds. Expressed in midvein, lamina and periphery of leaves (at protein level).

Its function is as follows. Probably participates in a plant defense mechanism. This chain is Acyclotide phyb-K, found in Petunia hybrida (Petunia).